A 150-amino-acid polypeptide reads, in one-letter code: D-aminoacyl-tRNA deacylase (150 aa).

Positions 140-141 (GP) match the Gly-cisPro motif, important for rejection of L-amino acids motif.

This sequence belongs to the DTD family. Homodimer.

It localises to the cytoplasm. It carries out the reaction glycyl-tRNA(Ala) + H2O = tRNA(Ala) + glycine + H(+). It catalyses the reaction a D-aminoacyl-tRNA + H2O = a tRNA + a D-alpha-amino acid + H(+). The catalysed reaction is D-tyrosyl-tRNA(Tyr) + H2O = D-tyrosine + tRNA(Tyr). In terms of biological role, an aminoacyl-tRNA editing enzyme that deacylates mischarged D-aminoacyl-tRNAs. Hydrolyzes D-tyrosyl-tRNA(Tyr) into D-tyrosine and free tRNA(Tyr). May also deacylate mischarged D-leucyl-tRNA(Leu). Also deacylates mischarged glycyl-tRNA(Ala), protecting cells against glycine mischarging by AlaRS. Acts via tRNA-based rather than protein-based catalysis; rejects L-amino acids rather than detecting D-amino acids in the active site. By recycling D-aminoacyl-tRNA to D-amino acids and free tRNA molecules, this enzyme counteracts the toxicity associated with the formation of D-aminoacyl-tRNA entities in vivo and helps enforce protein L-homochirality. The protein is D-aminoacyl-tRNA deacylase of Saccharomyces cerevisiae (strain ATCC 204508 / S288c) (Baker's yeast).